Reading from the N-terminus, the 504-residue chain is Glycerol kinase (504 aa).

Residue Thr14 participates in ADP binding. Positions 14, 15, and 16 each coordinate ATP. Position 14 (Thr14) interacts with sn-glycerol 3-phosphate. Arg18 is a binding site for ADP. Sn-glycerol 3-phosphate contacts are provided by Arg84, Glu85, and Tyr136. Residues Arg84, Glu85, and Tyr136 each coordinate glycerol. His232 carries the phosphohistidine; by HPr modification. Asp246 serves as a coordination point for sn-glycerol 3-phosphate. 2 residues coordinate glycerol: Asp246 and Gln247. ADP is bound by residues Thr268 and Gly311. Residues Thr268, Gly311, Gln315, and Gly412 each contribute to the ATP site. Residues Gly412 and Asn416 each contribute to the ADP site.

The protein belongs to the FGGY kinase family. Homotetramer and homodimer (in equilibrium). The phosphoenolpyruvate-dependent sugar phosphotransferase system (PTS), including enzyme I, and histidine-containing protein (HPr) are required for the phosphorylation, which leads to the activation of the enzyme.

The enzyme catalyses glycerol + ATP = sn-glycerol 3-phosphate + ADP + H(+). It functions in the pathway polyol metabolism; glycerol degradation via glycerol kinase pathway; sn-glycerol 3-phosphate from glycerol: step 1/1. Activated by phosphorylation and inhibited by fructose 1,6-bisphosphate (FBP). Functionally, key enzyme in the regulation of glycerol uptake and metabolism. Catalyzes the phosphorylation of glycerol to yield sn-glycerol 3-phosphate. This is Glycerol kinase from Streptococcus pyogenes serotype M6 (strain ATCC BAA-946 / MGAS10394).